Consider the following 277-residue polypeptide: Lectin 1 (277 aa).

The N-terminal stretch at 1 to 30 is a signal peptide; it reads MSFSSSNFYVILSISLTVFILLFNINKVNS. N-linked (GlcNAc...) asparagine glycosylation occurs at Asn143. Mn(2+)-binding residues include Glu152 and Asp154. Asp154, Asn158, and Asp161 together coordinate Ca(2+). Asp161 and His167 together coordinate Mn(2+). N-linked (GlcNAc...) asparagine glycosylation is present at Asn269.

This sequence belongs to the leguminous lectin family.

Its function is as follows. Lectin that may be involved in a cell recognition process. The polypeptide is Lectin 1 (LEC1) (Medicago truncatula (Barrel medic)).